We begin with the raw amino-acid sequence, 461 residues long: Cysteine--tRNA ligase (461 aa).

Position 28 (Cys-28) interacts with Zn(2+). The 'HIGH' region signature appears at 30-40 (ITVYDLCHIGH). Cys-209, His-234, and Glu-238 together coordinate Zn(2+). Residues 266 to 270 (KMSKS) carry the 'KMSKS' region motif. Lys-269 contributes to the ATP binding site.

The protein belongs to the class-I aminoacyl-tRNA synthetase family. Monomer. Zn(2+) is required as a cofactor.

Its subcellular location is the cytoplasm. The enzyme catalyses tRNA(Cys) + L-cysteine + ATP = L-cysteinyl-tRNA(Cys) + AMP + diphosphate. The chain is Cysteine--tRNA ligase from Escherichia coli O127:H6 (strain E2348/69 / EPEC).